The sequence spans 775 residues: Serine/threonine-protein kinase ppk6 (775 aa).

2 positions are modified to phosphoserine: S132 and S134. The 256-residue stretch at 503–758 (YTTIKELGIG…IEETLQHHWF (256 aa)) folds into the Protein kinase domain. ATP is bound by residues 509–517 (LGIGAYGQV) and K533. Catalysis depends on D636, which acts as the Proton acceptor.

This sequence belongs to the protein kinase superfamily. Ser/Thr protein kinase family.

Its subcellular location is the cytoplasm. It is found in the nucleus. It catalyses the reaction L-seryl-[protein] + ATP = O-phospho-L-seryl-[protein] + ADP + H(+). The enzyme catalyses L-threonyl-[protein] + ATP = O-phospho-L-threonyl-[protein] + ADP + H(+). This chain is Serine/threonine-protein kinase ppk6 (ppk6), found in Schizosaccharomyces pombe (strain 972 / ATCC 24843) (Fission yeast).